The primary structure comprises 249 residues: Diaminopimelate epimerase (249 aa).

Residues N11 and N60 each coordinate substrate. C69 serves as the catalytic Proton donor. Substrate is bound by residues G70–N71, N164, and E182–R183. C192 serves as the catalytic Proton acceptor. G193–T194 is a binding site for substrate.

The protein belongs to the diaminopimelate epimerase family. As to quaternary structure, homodimer.

The protein localises to the cytoplasm. It catalyses the reaction (2S,6S)-2,6-diaminopimelate = meso-2,6-diaminopimelate. The protein operates within amino-acid biosynthesis; L-lysine biosynthesis via DAP pathway; DL-2,6-diaminopimelate from LL-2,6-diaminopimelate: step 1/1. Its function is as follows. Catalyzes the stereoinversion of LL-2,6-diaminopimelate (L,L-DAP) to meso-diaminopimelate (meso-DAP), a precursor of L-lysine and an essential component of the bacterial peptidoglycan. The protein is Diaminopimelate epimerase of Campylobacter jejuni subsp. jejuni serotype O:2 (strain ATCC 700819 / NCTC 11168).